The chain runs to 294 residues: Glycine--tRNA ligase alpha subunit (294 aa).

Belongs to the class-II aminoacyl-tRNA synthetase family. In terms of assembly, tetramer of two alpha and two beta subunits.

The protein localises to the cytoplasm. It carries out the reaction tRNA(Gly) + glycine + ATP = glycyl-tRNA(Gly) + AMP + diphosphate. The sequence is that of Glycine--tRNA ligase alpha subunit from Trichodesmium erythraeum (strain IMS101).